The following is a 450-amino-acid chain: Neuronal acetylcholine receptor subunit alpha-10 (450 aa).

The N-terminal stretch at 1–24 (MGLRSHHLSLGLLLLFLLPAECLG) is a signal peptide. The Extracellular portion of the chain corresponds to 25 to 237 (AEGRLALKLF…FTLLLRRRAA (213 aa)). Residues asparagine 40 and asparagine 56 are each glycosylated (N-linked (GlcNAc...) asparagine). 2 disulfides stabilise this stretch: cysteine 154–cysteine 168 and cysteine 218–cysteine 219. 3 consecutive transmembrane segments (helical) span residues 238 to 258 (AYVC…PLAF), 268 to 288 (VSLG…LAES), and 302 to 322 (YMAT…IMNL). Residues 323–428 (HYCGPSVRPV…WKRLARVMDR (106 aa)) are Cytoplasmic-facing. Residues 355–380 (EPCGQSRPPELSPSPQSPEGGAGPPA) form a disordered region. Residues 429–449 (FFLAIFFSMALVMSLLVLVQA) form a helical membrane-spanning segment.

It belongs to the ligand-gated ion channel (TC 1.A.9) family. Acetylcholine receptor (TC 1.A.9.1) subfamily. Alpha-10/CHRNA10 sub-subfamily. In terms of assembly, forms homo- or heterooligomeric channels in conjunction with CHRNA10. The native outer hair cell receptor may be composed of CHRNA9:CHRNA10 heterooligomers. Found in the stoichiometric form (CHRNA9)2:(CHRNA10)3. In terms of tissue distribution, expressed in inner-ear tissue, tonsil, immortalized B-cells, cultured T-cells and peripheral blood lymphocytes.

Its subcellular location is the synaptic cell membrane. It is found in the cell membrane. It catalyses the reaction Ca(2+)(in) = Ca(2+)(out). The catalysed reaction is K(+)(in) = K(+)(out). The enzyme catalyses Na(+)(in) = Na(+)(out). It carries out the reaction Mg(2+)(in) = Mg(2+)(out). Its activity is regulated as follows. Activated by a myriad of ligands such as acetylcholine. AChR activity is inhibited by the antagonists alpha-conotoxins RgIA and GeXXA, small disulfide-constrained peptides from cone snails. In terms of biological role, component of neuronal acetylcholine receptors (nAChRs) that function as pentameric, ligand-gated cation channels with high calcium permeability. nAChRs are excitatory neurotrasnmitter receptors formed by a collection of nAChR subunits. Each nAchR subunit confers differential attributes to channel properties, including activation, deactivation and desensitization kinetics, pH sensitivity, cation permeability, and binding to allosteric modulators. Forms heteropentamers with CHRNA9. Expressed in the inner ear, in sympathetic neurons and in other non-neuronal cells, such as skin keratinocytes and lymphocytes. nAChR formed by CHRNA9:CHRNA10 is involved in modulation of auditory stimuli. The channel is permeable to a range of divalent cations including calcium, the influx of which may activate a potassium current which hyperpolarizes the cell membrane. In the ear, mediates synaptic transmission between efferent olivocochlear fibers and hair cells of the cochlea, this may lead to a reduction in basilar membrane motion, altering the activity of auditory nerve fibers and reducing the range of dynamic hearing. This may protect against acoustic trauma. May also regulate keratinocyte adhesion. The sequence is that of Neuronal acetylcholine receptor subunit alpha-10 from Homo sapiens (Human).